A 270-amino-acid chain; its full sequence is Formamidopyrimidine-DNA glycosylase (270 aa).

The active-site Schiff-base intermediate with DNA is the proline 2. Catalysis depends on glutamate 3, which acts as the Proton donor. Catalysis depends on lysine 58, which acts as the Proton donor; for beta-elimination activity. Residues histidine 91, arginine 110, and lysine 151 each contribute to the DNA site. The FPG-type zinc finger occupies 236–270 (FVYGRGGEACKVCGTELRNVVLGQRASVFCPRCQR). Residue arginine 260 is the Proton donor; for delta-elimination activity of the active site.

The protein belongs to the FPG family. In terms of assembly, monomer. It depends on Zn(2+) as a cofactor.

It carries out the reaction Hydrolysis of DNA containing ring-opened 7-methylguanine residues, releasing 2,6-diamino-4-hydroxy-5-(N-methyl)formamidopyrimidine.. The catalysed reaction is 2'-deoxyribonucleotide-(2'-deoxyribose 5'-phosphate)-2'-deoxyribonucleotide-DNA = a 3'-end 2'-deoxyribonucleotide-(2,3-dehydro-2,3-deoxyribose 5'-phosphate)-DNA + a 5'-end 5'-phospho-2'-deoxyribonucleoside-DNA + H(+). Its function is as follows. Involved in base excision repair of DNA damaged by oxidation or by mutagenic agents. Acts as a DNA glycosylase that recognizes and removes damaged bases. Has a preference for oxidized purines, such as 7,8-dihydro-8-oxoguanine (8-oxoG). Has AP (apurinic/apyrimidinic) lyase activity and introduces nicks in the DNA strand. Cleaves the DNA backbone by beta-delta elimination to generate a single-strand break at the site of the removed base with both 3'- and 5'-phosphates. The sequence is that of Formamidopyrimidine-DNA glycosylase from Pseudomonas fluorescens (strain SBW25).